The following is a 1092-amino-acid chain: Leukemia inhibitory factor receptor (1092 aa).

Residues 1–43 (MAAYSWWRQPSWMVDNKRSRMTPNLPWLLSALTLLHLTMHANG) form the signal peptide. The Extracellular segment spans residues 44 to 828 (LKRGVQDLKC…SMFVVTKENS (785 aa)). A Fibronectin type-III 1 domain is found at 45–126 (KRGVQDLKCT…QSKFTLNEKD (82 aa)). Disulfide bonds link C53–C63 and C80–C88. N-linked (GlcNAc...) asparagine glycosylation is found at N164, N199, N238, and N261. 2 cysteine pairs are disulfide-bonded: C208–C265 and C336–C346. Fibronectin type-III domains are found at residues 330–429 (VPQK…VAPH), 430–529 (DPTS…TEAT), 533–624 (GPDT…IPND), 622–714 (PNDD…IGYV), and 719–828 (PIVA…KENS). N385, N402, N421, N440, N453, and N476 each carry an N-linked (GlcNAc...) asparagine glycan. A disulfide bridge links C461 with C506. Residues 514–518 (WSRWS) carry the WSXWS motif motif. N-linked (GlcNAc...) asparagine glycans are attached at residues N567, N647, N658, N675, N724, and N782. A helical membrane pass occupies residues 829-853 (VGLIIAILIPVAVAVIVGVVTSILC). The Cytoplasmic segment spans residues 854-1092 (YRKREWIKET…TNFFQNKPND (239 aa)). A Box 1 motif motif is present at residues 864–872 (FYPDIPNPE). S922 and S1039 each carry phosphoserine. Residues 1009–1092 (EDTAAEDEEG…TNFFQNKPND (84 aa)) form a disordered region. Composition is skewed to polar residues over residues 1027–1062 (ANVNTWNLVSPDSPRSTDSNNEVVSFGSPCSINSRQ) and 1081–1092 (SFTNFFQNKPND).

It belongs to the type I cytokine receptor family. Type 2 subfamily. Heterodimer composed of LIFR and IL6ST. The heterodimer formed by LIFR and IL6ST interacts with the complex formed by CNTF and CNTFR. In terms of tissue distribution, placenta, liver, kidney, heart, lung, brain, and embryos. The liver may be the primary site of synthesis of the secreted form.

The protein resides in the cell membrane. It is found in the secreted. Functionally, signal-transducing molecule. May have a common pathway with IL6ST. The soluble form inhibits the biological activity of LIF by blocking its binding to receptors on target cells. The protein is Leukemia inhibitory factor receptor (Lifr) of Mus musculus (Mouse).